Reading from the N-terminus, the 180-residue chain is Adenine phosphoribosyltransferase (180 aa).

This sequence belongs to the purine/pyrimidine phosphoribosyltransferase family. In terms of assembly, homodimer.

The protein resides in the cytoplasm. The enzyme catalyses AMP + diphosphate = 5-phospho-alpha-D-ribose 1-diphosphate + adenine. It functions in the pathway purine metabolism; AMP biosynthesis via salvage pathway; AMP from adenine: step 1/1. Catalyzes a salvage reaction resulting in the formation of AMP, that is energically less costly than de novo synthesis. In Sinorhizobium medicae (strain WSM419) (Ensifer medicae), this protein is Adenine phosphoribosyltransferase.